Here is a 159-residue protein sequence, read N- to C-terminus: GDP-mannose mannosyl hydrolase (159 aa).

Substrate contacts are provided by residues 2 to 3 (FL), Phe-8, and Arg-36. A Nudix hydrolase domain is found at 13 to 153 (RSTPLVSLDF…SRAYFLAEKR (141 aa)). Mg(2+)-binding residues include Gly-49, Glu-69, and Gln-122. Residues 50–71 (GRVQKDETLEAAFERLTMAELG) carry the Nudix box motif.

It belongs to the Nudix hydrolase family. As to quaternary structure, homodimer. Mg(2+) serves as cofactor.

The enzyme catalyses GDP-alpha-D-mannose + H2O = D-mannose + GDP + H(+). Hydrolyzes GDP-mannose. The sequence is that of GDP-mannose mannosyl hydrolase from Escherichia coli O157:H7.